Reading from the N-terminus, the 262-residue chain is MKKLSLALVGAGGIGTTVLREIREGRLEGKVEPVLVCDRHPEKLKRIERWFPDCDTSTDLDDAMSAEADVLLEAASVEAAASLLPDALKRFDVIVMSVGALVLEEGLLSRCREVAEVTGHRLHVPSGAVGGLDVLRALRGRVREVTLTTIKPPKALNKDVSERTVLYEGSVRDAVRKFPKNINVAAAVSLAVGDPSLVTVRIVCDPEVSVNTHVIEVESSAGTYRFELRNEALPDNPKTSAVAAYSAVALIERMTEGIRVGT.

Ala128 and Asn183 together coordinate NAD(+). His213 is an active-site residue.

It belongs to the L-aspartate dehydrogenase family.

The enzyme catalyses L-aspartate + NADP(+) + H2O = oxaloacetate + NH4(+) + NADPH + H(+). It carries out the reaction L-aspartate + NAD(+) + H2O = oxaloacetate + NH4(+) + NADH + H(+). It functions in the pathway cofactor biosynthesis; NAD(+) biosynthesis; iminoaspartate from L-aspartate (dehydrogenase route): step 1/1. Its function is as follows. Specifically catalyzes the NAD or NADP-dependent dehydrogenation of L-aspartate to iminoaspartate. The protein is L-aspartate dehydrogenase of Methanopyrus kandleri (strain AV19 / DSM 6324 / JCM 9639 / NBRC 100938).